Reading from the N-terminus, the 763-residue chain is Polyribonucleotide nucleotidyltransferase (763 aa).

Mg(2+)-binding residues include Asp-526 and Asp-532. The 60-residue stretch at 592 to 651 (PRITTIKVPVDKIGEVIGPKGKMINSITEETGAQISIEDDGTVFVGAADGLSAQAAIDKI) folds into the KH domain. Residues 663-732 (GERFLGTVVK…NRGKISLVLV (70 aa)) form the S1 motif domain. Residues 739-763 (SAESAGDKGAEKAEGAAADVTPAEA) form a disordered region. Basic and acidic residues predominate over residues 743–752 (AGDKGAEKAE).

The protein belongs to the polyribonucleotide nucleotidyltransferase family. The cofactor is Mg(2+).

The protein resides in the cytoplasm. The catalysed reaction is RNA(n+1) + phosphate = RNA(n) + a ribonucleoside 5'-diphosphate. Involved in mRNA degradation. Catalyzes the phosphorolysis of single-stranded polyribonucleotides processively in the 3'- to 5'-direction. The sequence is that of Polyribonucleotide nucleotidyltransferase from Mycolicibacterium smegmatis (strain ATCC 700084 / mc(2)155) (Mycobacterium smegmatis).